A 29-amino-acid chain; its full sequence is Galanin (29 aa).

Ala-29 is modified (alanine amide).

The protein belongs to the galanin family.

It is found in the secreted. In terms of biological role, contracts smooth muscle of the gastrointestinal and genitourinary tract, regulates growth hormone release, modulates insulin release, and may be involved in the control of adrenal secretion. This is Galanin (gal) from Pelophylax ridibundus (Marsh frog).